The following is a 209-amino-acid chain: Guanylate kinase (209 aa).

The region spanning 9 to 188 (GIMLVISSPS…SVYQIKCIFT (180 aa)) is the Guanylate kinase-like domain. Residue 16-23 (SPSGGGKT) participates in ATP binding.

This sequence belongs to the guanylate kinase family.

The protein resides in the cytoplasm. It catalyses the reaction GMP + ATP = GDP + ADP. Essential for recycling GMP and indirectly, cGMP. This Ehrlichia chaffeensis (strain ATCC CRL-10679 / Arkansas) protein is Guanylate kinase.